Reading from the N-terminus, the 2194-residue chain is Genome polyprotein (2194 aa).

Gly-2 carries the N-myristoyl glycine; by host lipid modification. At 2-1504 (GAQVSTQKTG…HVSRAFICLQ (1503 aa)) the chain is on the cytoplasmic side. The segment at 566 to 582 (LYQNDPEGALNKAVGRV) is amphipathic alpha-helix. Active-site for protease 2A activity residues include His-881 and Asp-899. Zn(2+) is bound by residues Cys-916 and Cys-918. Cys-970 (for protease 2A activity) is an active-site residue. Zn(2+) contacts are provided by Cys-976 and His-978. Positions 1110–1182 (NNNWLKKFTE…EQSAPSQSDQ (73 aa)) are membrane-binding. The tract at residues 1110 to 1248 (NNNWLKKFTE…SPGAGKSVAT (139 aa)) is oligomerization. The segment at 1131–1135 (AIKIQ) is RNA-binding. Positions 1214-1370 (EKKMSNYIQF…SMYSQNGKIN (157 aa)) constitute an SF3 helicase domain. Residues Cys-1378, Cys-1390, and Cys-1395 each contribute to the Zn(2+) site. The C4-type; degenerate zinc finger occupies 1378 to 1395 (CDEECCPVNFKRCCPLVC). The segment at 1422–1429 (EYNHRHSV) is RNA-binding. An oligomerization region spans residues 1433 to 1438 (LEALFQ). An intramembrane segment occupies 1505-1520 (ALTTFVSVAGIIYIIY). Topologically, residues 1521–2194 (KLFAGFQGAY…TLRRKWLDSF (674 aa)) are cytoplasmic. The residue at position 1530 (Tyr-1530) is an O-(5'-phospho-RNA)-tyrosine. Residues 1550-1728 (GPAFEFAVAM…FSAALLRHYF (179 aa)) enclose the Peptidase C3 domain. Catalysis depends on for protease 3C activity residues His-1589, Glu-1620, and Cys-1696. Residues 1959 to 2075 (GHLIAFDYSG…SYPHPIDASL (117 aa)) enclose the RdRp catalytic domain. Positions 1965 and 2061 each coordinate Mg(2+).

Belongs to the picornaviruses polyprotein family. As to quaternary structure, interacts with capsid protein VP1 and capsid protein VP3 to form heterotrimeric protomers. Interacts with capsid protein VP0, and capsid protein VP3 to form heterotrimeric protomers. Five protomers subsequently associate to form pentamers which serve as building blocks for the capsid. Interacts with capsid protein VP2, capsid protein VP3 and capsid protein VP4 following cleavage of capsid protein VP0. In terms of assembly, interacts with capsid protein VP1 and capsid protein VP3 in the mature capsid. As to quaternary structure, interacts with capsid protein VP0 and capsid protein VP1 to form heterotrimeric protomers. Five protomers subsequently associate to form pentamers which serve as building blocks for the capsid. Interacts with capsid protein VP4 in the mature capsid. Interacts with protein 2C; this interaction may be important for virion morphogenesis. Interacts with capsid protein VP1 and capsid protein VP3. In terms of assembly, homodimer. As to quaternary structure, homohexamer; forms a hexameric ring structure with 6-fold symmetry characteristic of AAA+ ATPases. Interacts (via N-terminus) with host RTN3 (via reticulon domain); this interaction is important for viral replication. Interacts with capsid protein VP3; this interaction may be important for virion morphogenesis. Interacts with protein 3CD. In terms of assembly, homodimer. Interacts with host GBF1. Interacts (via GOLD domain) with host ACBD3 (via GOLD domain); this interaction allows the formation of a viral protein 3A/ACBD3 heterotetramer with a 2:2 stoichiometry, which will stimulate the recruitment of host PI4KB in order to synthesize PI4P at the viral RNA replication sites. As to quaternary structure, interacts with RNA-directed RNA polymerase. Interacts with protein 3AB and with RNA-directed RNA polymerase. In terms of assembly, interacts with Viral protein genome-linked and with protein 3CD. Mg(2+) is required as a cofactor. Specific enzymatic cleavages in vivo by the viral proteases yield processing intermediates and the mature proteins. Post-translationally, myristoylation is required for the formation of pentamers during virus assembly. Further assembly of 12 pentamers and a molecule of genomic RNA generates the provirion. In terms of processing, during virion maturation, immature virions are rendered infectious following cleavage of VP0 into VP4 and VP2. This maturation seems to be an autocatalytic event triggered by the presence of RNA in the capsid and it is followed by a conformational change infectious virion. Myristoylation is required during RNA encapsidation and formation of the mature virus particle. Post-translationally, VPg is uridylylated by the polymerase into VPg-pUpU. This acts as a nucleotide-peptide primer for the genomic RNA replication.

The protein localises to the virion. Its subcellular location is the host cytoplasm. It localises to the host cytoplasmic vesicle membrane. The protein resides in the host nucleus. It catalyses the reaction a ribonucleoside 5'-triphosphate + H2O = a ribonucleoside 5'-diphosphate + phosphate + H(+). It carries out the reaction Selective cleavage of Tyr-|-Gly bond in the picornavirus polyprotein.. The catalysed reaction is RNA(n) + a ribonucleoside 5'-triphosphate = RNA(n+1) + diphosphate. The enzyme catalyses Selective cleavage of Gln-|-Gly bond in the poliovirus polyprotein. In other picornavirus reactions Glu may be substituted for Gln, and Ser or Thr for Gly.. With respect to regulation, replication or transcription is subject to high level of random mutations by the nucleotide analog ribavirin. In terms of biological role, forms an icosahedral capsid of pseudo T=3 symmetry with capsid proteins VP2 and VP3. The capsid is 300 Angstroms in diameter, composed of 60 copies of each capsid protein and enclosing the viral positive strand RNA genome. Capsid protein VP1 mainly forms the vertices of the capsid. Capsid protein VP1 interacts with host cell receptor to provide virion attachment to target host cells. This attachment induces virion internalization. Tyrosine kinases are probably involved in the entry process. After binding to its receptor, the capsid undergoes conformational changes. Capsid protein VP1 N-terminus (that contains an amphipathic alpha-helix) and capsid protein VP4 are externalized. Together, they shape a pore in the host membrane through which viral genome is translocated to host cell cytoplasm. Forms an icosahedral capsid of pseudo T=3 symmetry with capsid proteins VP2 and VP3. The capsid is 300 Angstroms in diameter, composed of 60 copies of each capsid protein and enclosing the viral positive strand RNA genome. Its function is as follows. Lies on the inner surface of the capsid shell. After binding to the host receptor, the capsid undergoes conformational changes. Capsid protein VP4 is released, Capsid protein VP1 N-terminus is externalized, and together, they shape a pore in the host membrane through which the viral genome is translocated into the host cell cytoplasm. Functionally, component of immature procapsids, which is cleaved into capsid proteins VP4 and VP2 after maturation. Allows the capsid to remain inactive before the maturation step. In terms of biological role, cysteine protease that cleaves viral polyprotein and specific host proteins. It is responsible for the autocatalytic cleavage between the P1 and P2 regions, which is the first cleavage occurring in the polyprotein. Also cleaves the host translation initiation factor EIF4G1, in order to shut down the capped cellular mRNA translation. Inhibits the host nucleus-cytoplasm protein and RNA trafficking by cleaving host members of the nuclear pores. Counteracts stress granule formation probably by antagonizing its assembly or promoting its dissassembly. Plays an essential role in the virus replication cycle by acting as a viroporin. Creates a pore in the host endoplasmic reticulum and as a consequence releases Ca2+ in the cytoplasm of infected cell. In turn, high levels of cytoplasmic calcium may trigger membrane trafficking and transport of viral ER-associated proteins to viroplasms, sites of viral genome replication. Its function is as follows. Induces and associates with structural rearrangements of intracellular membranes. Displays RNA-binding, nucleotide binding and NTPase activities. May play a role in virion morphogenesis and viral RNA encapsidation by interacting with the capsid protein VP3. Functionally, localizes the viral replication complex to the surface of membranous vesicles. Together with protein 3CD binds the Cis-Active RNA Element (CRE) which is involved in RNA synthesis initiation. Acts as a cofactor to stimulate the activity of 3D polymerase, maybe through a nucleid acid chaperone activity. In terms of biological role, localizes the viral replication complex to the surface of membranous vesicles. It inhibits host cell endoplasmic reticulum-to-Golgi apparatus transport and causes the disassembly of the Golgi complex, possibly through GBF1 interaction. This would result in depletion of MHC, trail receptors and IFN receptors at the host cell surface. Plays an essential role in viral RNA replication by recruiting ACBD3 and PI4KB at the viral replication sites, thereby allowing the formation of the rearranged membranous structures where viral replication takes place. Acts as a primer for viral RNA replication and remains covalently bound to viral genomic RNA. VPg is uridylylated prior to priming replication into VPg-pUpU. The oriI viral genomic sequence may act as a template for this. The VPg-pUpU is then used as primer on the genomic RNA poly(A) by the RNA-dependent RNA polymerase to replicate the viral genome. During genome replication, the VPg-RNA linkage is removed by the host TDP2, thereby accelerating replication. During the late stage of the replication cycle, host TDP2 is excluded from sites of viral RNA synthesis and encapsidation, allowing for the generation of progeny virions. Its function is as follows. Involved in the viral replication complex and viral polypeptide maturation. It exhibits protease activity with a specificity and catalytic efficiency that is different from protease 3C. Protein 3CD lacks polymerase activity. Protein 3CD binds to the 5'UTR of the viral genome. Functionally, replicates the viral genomic RNA on the surface of intracellular membranes. May form linear arrays of subunits that propagate along a strong head-to-tail interaction called interface-I. Covalently attaches UMP to a tyrosine of VPg, which is used to prime RNA synthesis. The positive stranded RNA genome is first replicated at virus induced membranous vesicles, creating a dsRNA genomic replication form. This dsRNA is then used as template to synthesize positive stranded RNA genomes. ss(+)RNA genomes are either translated, replicated or encapsidated. In terms of biological role, major viral protease that mediates proteolytic processing of the polyprotein. Cleaves host EIF5B, contributing to host translation shutoff. Also cleaves host PABPC1, contributing to host translation shutoff. Cleaves host NLRP1, triggers host N-glycine-mediated degradation of the autoinhibitory NLRP1 N-terminal fragment. The polypeptide is Genome polyprotein (Homo sapiens (Human)).